The sequence spans 86 residues: MKNTVLNLQDLFLNNARKERIPVTIYLVNGVQVKGLVKGFDSYIILIEGDNRQQNMIYKHAVSTIQPGKYINLTNQNQNNNNNNNR.

A Sm domain is found at 10–71 (DLFLNNARKE…VSTIQPGKYI (62 aa)).

Belongs to the Hfq family. In terms of assembly, homohexamer.

RNA chaperone that binds small regulatory RNA (sRNAs) and mRNAs to facilitate mRNA translational regulation in response to envelope stress, environmental stress and changes in metabolite concentrations. Also binds with high specificity to tRNAs. This Clostridioides difficile (strain 630) (Peptoclostridium difficile) protein is RNA-binding protein Hfq.